Consider the following 236-residue polypeptide: Endonuclease NucS (236 aa).

The protein belongs to the NucS endonuclease family.

The protein resides in the cytoplasm. Functionally, cleaves both 3' and 5' ssDNA extremities of branched DNA structures. The sequence is that of Endonuclease NucS from Saccharolobus solfataricus (strain ATCC 35092 / DSM 1617 / JCM 11322 / P2) (Sulfolobus solfataricus).